The primary structure comprises 190 residues: MKEVNKEQIEQAVRQILEAIGEDPNREGLLDTPKRVAKMYAEVFSGLNEDPKEHFQTIFGENHEELVLVKDIAFHSMCEHHLVPFYGKAHVAYIPRGGKVTGLSKLARAVEAVAKRPQLQERITSTIAESIVETLDPHGVMVVVEAEHMCMTMRGVRKPGAKTVTSAVRGVFKDDAAARAEVLEHIKRQD.

3 residues coordinate Zn(2+): cysteine 78, histidine 81, and cysteine 150.

The protein belongs to the GTP cyclohydrolase I family. As to quaternary structure, toroid-shaped homodecamer, composed of two pentamers of five dimers.

The enzyme catalyses GTP + H2O = 7,8-dihydroneopterin 3'-triphosphate + formate + H(+). Its pathway is cofactor biosynthesis; 7,8-dihydroneopterin triphosphate biosynthesis; 7,8-dihydroneopterin triphosphate from GTP: step 1/1. K(+) ions moderately increases the Vmax, whereas UTP and Ca(2+) and Mg(2+) ions drastically increase the Km for GTP. This Bacillus subtilis (strain 168) protein is GTP cyclohydrolase 1 (folE).